Here is a 178-residue protein sequence, read N- to C-terminus: Large ribosomal subunit protein uL5 (178 aa).

Belongs to the universal ribosomal protein uL5 family. Part of the 50S ribosomal subunit; part of the 5S rRNA/L5/L18/L25 subcomplex. Contacts the 5S rRNA and the P site tRNA. Forms a bridge to the 30S subunit in the 70S ribosome.

This is one of the proteins that bind and probably mediate the attachment of the 5S RNA into the large ribosomal subunit, where it forms part of the central protuberance. In the 70S ribosome it contacts protein S13 of the 30S subunit (bridge B1b), connecting the 2 subunits; this bridge is implicated in subunit movement. Contacts the P site tRNA; the 5S rRNA and some of its associated proteins might help stabilize positioning of ribosome-bound tRNAs. This is Large ribosomal subunit protein uL5 from Psychrobacter sp. (strain PRwf-1).